Here is a 379-residue protein sequence, read N- to C-terminus: Succinate--CoA ligase [ADP-forming] subunit beta (379 aa).

The region spanning 9-237 (RDILARYGIP…SSDEPEAEQR (229 aa)) is the ATP-grasp domain. Residues lysine 45, 52–54 (GRG), isoleucine 94, and glutamate 99 each bind ATP. The Mg(2+) site is built by asparagine 192 and aspartate 206. Substrate-binding positions include asparagine 257 and 314-316 (GIT).

It belongs to the succinate/malate CoA ligase beta subunit family. As to quaternary structure, heterotetramer of two alpha and two beta subunits. Mg(2+) serves as cofactor.

It catalyses the reaction succinate + ATP + CoA = succinyl-CoA + ADP + phosphate. The enzyme catalyses GTP + succinate + CoA = succinyl-CoA + GDP + phosphate. The protein operates within carbohydrate metabolism; tricarboxylic acid cycle; succinate from succinyl-CoA (ligase route): step 1/1. Its function is as follows. Succinyl-CoA synthetase functions in the citric acid cycle (TCA), coupling the hydrolysis of succinyl-CoA to the synthesis of either ATP or GTP and thus represents the only step of substrate-level phosphorylation in the TCA. The beta subunit provides nucleotide specificity of the enzyme and binds the substrate succinate, while the binding sites for coenzyme A and phosphate are found in the alpha subunit. The chain is Succinate--CoA ligase [ADP-forming] subunit beta from Roseiflexus sp. (strain RS-1).